The following is a 104-amino-acid chain: Thioredoxin-2 (104 aa).

The Thioredoxin domain occupies 2–104; sequence VTQLKSASEY…AIKQAIASNV (103 aa). Residues cysteine 31 and cysteine 34 each act as nucleophile in the active site. A disulfide bond links cysteine 31 and cysteine 34. Serine 62 bears the Phosphoserine mark. Residues lysine 67 and lysine 97 each participate in a glycyl lysine isopeptide (Lys-Gly) (interchain with G-Cter in ubiquitin) cross-link.

Belongs to the thioredoxin family. As to quaternary structure, monomer. Part of the heterodimeric LMA1 complex together with the proteinase inhibitor PBI2. LMA1 binds to the ATPase SEC18. Post-translationally, reversible disulfide bond formation between Cys-31 and Cys-34, reverted by thioredoxin reductase TRR1 using NADPH as hydrogen donor.

The protein localises to the cytoplasm. The protein resides in the golgi apparatus membrane. Its subcellular location is the nucleus. Participates as a hydrogen donor in redox reactions through the reversible oxidation of its active center dithiol to a disulfide, accompanied by the transfer of 2 electrons and 2 protons. It is involved in many cellular processes, including deoxyribonucleotide synthesis, repair of oxidatively damaged proteins, protein folding, sulfur metabolism, and redox homeostasis. Thioredoxin-dependent enzymes include phosphoadenosine-phosphosulfate reductase MET16, alkyl-hydroperoxide reductase DOT5, thioredoxin peroxidases TSA1 and TSA2, alkyl hydroperoxide reductase AHP1, and peroxiredoxin HYR1. Thioredoxin is also involved in protection against reducing stress. As part of the LMA1 complex, it is involved in the facilitation of vesicle fusion such as homotypic vacuole and ER-derived COPII vesicle fusion with the Golgi. This activity does not require the redox mechanism. Through its capacity to inactivate the stress response transcription factor YAP1 and its regulator the hydroperoxide stress sensor HYR1, it is involved in feedback regulation of stress response gene expression upon oxidative stress. The sequence is that of Thioredoxin-2 (TRX2) from Saccharomyces cerevisiae (strain ATCC 204508 / S288c) (Baker's yeast).